Reading from the N-terminus, the 426-residue chain is Limonoid 21-O-acetyltransferse (426 aa).

Catalysis depends on proton acceptor residues His152 and Asp365.

This sequence belongs to the plant acyltransferase family. Monomer. As to expression, expressed in maturing fruits and in juice vesicles.

It catalyses the reaction isomeliandiol + acetyl-CoA = 21-O-acetyl-isomeliandiol + CoA. It functions in the pathway secondary metabolite biosynthesis; terpenoid biosynthesis. In terms of biological role, acetyltransferase involved in the biosynthesis of limonoids triterpene natural products such as limonin, a compound with insecticidal activity responsible for the bitter taste in citrus. Catalyzes the formation of 21-O-acetyl-isomeliandiol from isomeliandiol. The protein is Limonoid 21-O-acetyltransferse of Citrus sinensis (Sweet orange).